A 429-amino-acid chain; its full sequence is Dihydroorotase (429 aa).

Zn(2+)-binding residues include His59 and His61. Residues 61–63 (HLR) and Asn93 each bind substrate. The Zn(2+) site is built by Lys143, His171, His229, and Asp298. At Lys143 the chain carries N6-carboxylysine. Asp298 is an active-site residue. Substrate contacts are provided by residues His302 and 316–317 (AG).

It belongs to the metallo-dependent hydrolases superfamily. DHOase family. Class I DHOase subfamily. It depends on Zn(2+) as a cofactor.

It catalyses the reaction (S)-dihydroorotate + H2O = N-carbamoyl-L-aspartate + H(+). Its pathway is pyrimidine metabolism; UMP biosynthesis via de novo pathway; (S)-dihydroorotate from bicarbonate: step 3/3. Catalyzes the reversible cyclization of carbamoyl aspartate to dihydroorotate. The chain is Dihydroorotase from Methanosphaera stadtmanae (strain ATCC 43021 / DSM 3091 / JCM 11832 / MCB-3).